A 590-amino-acid chain; its full sequence is RNA-binding protein 47 (590 aa).

Residues 1 to 21 (MTAEDSTTAMNSDPTVGSSTK) show a composition bias toward polar residues. Residues 1–26 (MTAEDSTTAMNSDPTVGSSTKVPEGV) form a disordered region. RRM domains are found at residues 71-149 (CEVF…CSVD), 151-233 (CRLF…WAEP), and 246-318 (KILY…LAKP). Arginine 396 and arginine 407 each carry asymmetric dimethylarginine; alternate. Omega-N-methylarginine; alternate occurs at positions 396 and 407.

It belongs to the RRM RBM47 family. Homodimer. Interacts with A1CF. Interacts with APOBEC1; form an mRNA editing complex. Interacts with RBPMS.

Its subcellular location is the nucleus. The protein resides in the cytoplasm. In terms of biological role, single-stranded RNA-binding protein that functions in a variety of RNA processes, including alternative splicing, RNA stabilization, and RNA editing. Functions as an enzyme-substrate adapter for the cytidine deaminase APOBEC1. With APOBEC1 forms an mRNA editing complex involved into cytidine to uridine editing of a variety of mRNA molecules. Through the binding of their 3'UTR, also stabilizes a variety of mRNAs and regulates the expression of genes such as the interferon alpha/beta receptor and interleukin-10. Also involved in the alternative splicing of several genes including TJP1. Binds the pre-mRNA (U)GCAUG consensus sequences in downstream intronic regions of alternative exons regulating their exclusion and inclusion into mRNAs. Independently of its RNA-binding activity, could negatively regulate MAVS by promoting its lysosomal degradation. The polypeptide is RNA-binding protein 47 (Rattus norvegicus (Rat)).